The sequence spans 315 residues: Calumenin (315 aa).

Positions 1-19 are cleaved as a signal peptide; sequence MNKRPLLLCLGLWVACTLS. EF-hand domains lie at 68 to 103, 104 to 139, 151 to 186, 188 to 223, 229 to 264, and 265 to 300; these read ESKE…AQKK, YVYD…TYLD, QMMI…EEFD, MKDI…HDGD, WVKT…SDYD, and HSEA…FVGS. Ca(2+) is bound by residues D81, D83, D85, Y87, E92, D117, S119, D121, and E128. N131 carries an N-linked (GlcNAc...) asparagine glycan. Residues D164, D166, D168, E175, D201, N203, D205, E212, D242, N244, D246, K248, E253, D278, N280, D282, K284, and E289 each coordinate Ca(2+). A Prevents secretion from ER motif is present at residues 312 to 315; that stretch reads HDEF.

This sequence belongs to the CREC family. In terms of assembly, interacts with ggcx.

It localises to the endoplasmic reticulum membrane. It is found in the golgi apparatus. Its subcellular location is the secreted. The protein resides in the melanosome. The protein localises to the sarcoplasmic reticulum lumen. Functionally, involved in regulation of vitamin K-dependent carboxylation of multiple N-terminal glutamate residues. Seems to inhibit gamma-carboxylase ggcx. Binds 7 calcium ions with a low affinity. In Xenopus laevis (African clawed frog), this protein is Calumenin (calu).